We begin with the raw amino-acid sequence, 156 residues long: MKFNDVYNKHHKIIHHLLKKYNISYNYDEYYQLLLIKMWQLSQIYKPSSKQSLSSFLFTRLNFYLIDLFRQQNQLKDVILCENNSPTLTEQPTYFNEHDLRLQDIFKFLNHRERLWLKLYLEGYKQFEIAEIMSLSLSTIKLIKTSVKRKCQHNFK.

Residues 29–44 carry the Polymerase core binding motif; sequence EYYQLLLIKMWQLSQI. A DNA-binding region (H-T-H motif) is located at residues 126–145; that stretch reads QFEIAEIMSLSLSTIKLIKT.

Belongs to the sigma-70 factor family.

Sigma factors are initiation factors that promote the attachment of RNA polymerase to specific initiation sites and are then released. Sigma-S contributes to the protection against external stress, thus playing a role in cellular fitness and survival. The sequence is that of RNA polymerase sigma factor SigS (sigS) from Staphylococcus aureus (strain bovine RF122 / ET3-1).